Here is a 367-residue protein sequence, read N- to C-terminus: tRNA (cytosine(34)-C(5))-methyltransferase, mitochondrial (367 aa).

Residues 170–176 (CAAPGGK), Glu193, Asp224, and Asp242 each bind S-adenosyl-L-methionine. The Nucleophile role is filled by Cys296.

This sequence belongs to the class I-like SAM-binding methyltransferase superfamily. RsmB/NOP family.

It localises to the mitochondrion matrix. The enzyme catalyses cytidine(34) in mitochondrial tRNA + S-adenosyl-L-methionine = 5-methylcytidine(34) in mitochondrial tRNA + S-adenosyl-L-homocysteine + H(+). Functionally, mitochondrial tRNA methyltransferase that mediates methylation of cytosine to 5-methylcytosine (m5C) at position 34 of mt-tRNA(Met). mt-tRNA(Met) methylation at cytosine(34) takes place at the wobble position of the anticodon and initiates the formation of 5-formylcytosine (f(5)c) at this position. mt-tRNA(Met) containing the f(5)c modification at the wobble position enables recognition of the AUA codon in addition to the AUG codon, expanding codon recognition in mitochondrial translation. This is tRNA (cytosine(34)-C(5))-methyltransferase, mitochondrial from Danio rerio (Zebrafish).